The sequence spans 299 residues: Prohibitin-2 (299 aa).

An N-acetylalanine modification is found at A2. Residues 19–49 (MGTALKLLLGAGAVAYGVRESVFTVEGGHRA) form a necessary for transcriptional repression region. Y128 carries the phosphotyrosine modification. At K147 the chain carries N6-acetyllysine. The interval 150 to 174 (ASQLITQRAQVSLLIRRELTERAKD) is necessary for transcriptional repression. Position 151 is a phosphoserine (S151). Residues 190–238 (SREYTAAVEAKQVAQQEAQRAQFLVEKAKQEQRQKIVQAEGEAEAAKML) are a coiled coil. Residues K200, K236, K250, and K262 each carry the N6-acetyllysine modification.

The protein belongs to the prohibitin family. As to quaternary structure, the mitochondrial prohibitin complex consists of two subunits (PHB1 and PHB2), assembled into a membrane-associated ring-shaped supercomplex of approximately 1 mDa. Interacts with ESR1, HDAC1 and HDAC5. Interacts with ZNF703. Interacts with STOML2. Interacts with ARFGEF3. Interacts with SPHK2. Interacts with COX4I1; the interaction associates PHB2 with COX. Interacts with MAP1LC3B (membrane-bound form LC3-II); the interaction is direct and upon mitochondrial depolarization and proteasome-dependent outer membrane rupture. Interacts with IGFBP6 (via C-terminal domain). Interacts with CLPB. Interacts with CD86 (via cytoplasmic domain); the interactions increases after priming with CD40. Interacts with AFG3L2. Interacts with DNAJC19. Interacts with AKT2; this interaction may be important for myogenic differentiation. Post-translationally, phosphorylated. Tyrosine phosphorylation is indirectly stimulated by IGFBP6.

The protein resides in the mitochondrion inner membrane. The protein localises to the cytoplasm. It localises to the nucleus. Its subcellular location is the cell membrane. Functionally, protein with pleiotropic attributes mediated in a cell-compartment- and tissue-specific manner, which include the plasma membrane-associated cell signaling functions, mitochondrial chaperone, and transcriptional co-regulator of transcription factors and sex steroid hormones in the nucleus. Its function is as follows. In the mitochondria, together with PHB, forms large ring complexes (prohibitin complexes) in the inner mitochondrial membrane (IMM) and functions as a chaperone protein that stabilizes mitochondrial respiratory enzymes and maintains mitochondrial integrity in the IMM, which is required for mitochondrial morphogenesis, neuronal survival, and normal lifespan. The prohibitin complex, with DNAJC19, regulates cardiolipin remodeling and the protein turnover of OMA1 in a cardiolipin-binding manner. Also regulates cytochrome-c oxidase assembly (COX) and mitochondrial respiration. Binding to sphingoid 1-phosphate (SPP) modulates its regulator activity. Has a key role of mitophagy receptor involved in targeting mitochondria for autophagic degradation. Involved in mitochondrial-mediated antiviral innate immunity, activates RIG-I-mediated signal transduction and production of IFNB1 and pro-inflammatory cytokine IL6. In the nucleus, serves as transcriptional co-regulator. Acts as a mediator of transcriptional repression by nuclear hormone receptors via recruitment of histone deacetylases. Functions as an estrogen receptor (ER)-selective coregulator that potentiates the inhibitory activities of antiestrogens and represses the activity of estrogens. Competes with NCOA1 for modulation of ER transcriptional activity. In terms of biological role, in the plasma membrane, is involved in IGFBP6-induced cell migration. Cooperates with CD86 to mediate CD86-signaling in B lymphocytes that regulates the level of IgG1 produced through the activation of distal signaling intermediates. Upon CD40 engagement, required to activate NF-kappa-B signaling pathway via phospholipase C and protein kinase C activation. This Pongo abelii (Sumatran orangutan) protein is Prohibitin-2 (PHB2).